The primary structure comprises 165 residues: K(+)/H(+) antiporter subunit KhtT (165 aa).

The 86-residue stretch at 76 to 161 (LESIEMAFSD…LKKLIHDFLS (86 aa)) folds into the RCK C-terminal domain.

In terms of assembly, the transporter is composed of the integral membrane protein KhtU and the regulatory protein KhtT.

The protein resides in the cell membrane. Its activity is regulated as follows. Binds cyclic di-AMP (c-di-AMP), which may regulate the activity. Required for activity of the potassium/proton antiporter KhtU. Involved in protection of the cell from methylglyoxal, a toxic by-product of glycolysis. This Bacillus subtilis (strain 168) protein is K(+)/H(+) antiporter subunit KhtT.